Here is a 633-residue protein sequence, read N- to C-terminus: DNA mismatch repair protein MutL (633 aa).

Disordered stretches follow at residues 337–364 and 383–405; these read RPDD…GEFG and VGWS…TRPE. The segment covering 385–396 has biased composition (gly residues); it reads WSGGSSASGGSS.

It belongs to the DNA mismatch repair MutL/HexB family.

This protein is involved in the repair of mismatches in DNA. It is required for dam-dependent methyl-directed DNA mismatch repair. May act as a 'molecular matchmaker', a protein that promotes the formation of a stable complex between two or more DNA-binding proteins in an ATP-dependent manner without itself being part of a final effector complex. The polypeptide is DNA mismatch repair protein MutL (Pseudomonas aeruginosa (strain UCBPP-PA14)).